The following is a 232-amino-acid chain: Protein FAM246A (232 aa).

Disordered stretches follow at residues 1–47, 153–178, and 191–232; these read MATP…RAPG, LPPP…RGPT, and AASR…GGGD. Over residues 19 to 31 the composition is skewed to basic and acidic residues; the sequence is EVLRRVTGRRRDP. Residues 211-220 show a composition bias toward basic residues; it reads APVRKNHKKM.

It belongs to the FAM246 family.

The chain is Protein FAM246A from Homo sapiens (Human).